The sequence spans 457 residues: Glutamate--tRNA ligase 1 (457 aa).

Residues 9–19 (PSPTGYIHIGN) carry the 'HIGH' region motif. Residues 250-254 (GLSKR) carry the 'KMSKS' region motif. Lysine 253 is a binding site for ATP.

This sequence belongs to the class-I aminoacyl-tRNA synthetase family. Glutamate--tRNA ligase type 1 subfamily. In terms of assembly, monomer.

Its subcellular location is the cytoplasm. It carries out the reaction tRNA(Glu) + L-glutamate + ATP = L-glutamyl-tRNA(Glu) + AMP + diphosphate. Functionally, catalyzes the attachment of glutamate to tRNA(Glu) in a two-step reaction: glutamate is first activated by ATP to form Glu-AMP and then transferred to the acceptor end of tRNA(Glu). In Brucella abortus (strain S19), this protein is Glutamate--tRNA ligase 1.